A 101-amino-acid polypeptide reads, in one-letter code: Small ribosomal subunit protein uS14 (101 aa).

It belongs to the universal ribosomal protein uS14 family. As to quaternary structure, part of the 30S ribosomal subunit. Contacts proteins S3 and S10.

Binds 16S rRNA, required for the assembly of 30S particles and may also be responsible for determining the conformation of the 16S rRNA at the A site. This is Small ribosomal subunit protein uS14 from Wigglesworthia glossinidia brevipalpis.